Here is a 221-residue protein sequence, read N- to C-terminus: Ribosomal RNA small subunit methyltransferase Nep1 (221 aa).

Residues Gly-174, Gly-179, and Ile-196–Met-201 contribute to the S-adenosyl-L-methionine site.

This sequence belongs to the class IV-like SAM-binding methyltransferase superfamily. RNA methyltransferase NEP1 family. In terms of assembly, homodimer.

It catalyses the reaction a pseudouridine in rRNA + S-adenosyl-L-methionine = an N(1)-methylpseudouridine in rRNA + S-adenosyl-L-homocysteine + H(+). In terms of biological role, methyltransferase involved in ribosomal biogenesis. Specifically catalyzes the N1-methylation of the pseudouridine corresponding to position 914 in M.jannaschii 16S rRNA. The protein is Ribosomal RNA small subunit methyltransferase Nep1 of Pyrobaculum islandicum (strain DSM 4184 / JCM 9189 / GEO3).